Here is a 421-residue protein sequence, read N- to C-terminus: UDP-N-acetylglucosamine 1-carboxyvinyltransferase 1 (421 aa).

Residue 22-23 (KN) coordinates phosphoenolpyruvate. Arg-95 contacts UDP-N-acetyl-alpha-D-glucosamine. Cys-119 (proton donor) is an active-site residue. Cys-119 bears the 2-(S-cysteinyl)pyruvic acid O-phosphothioketal mark. UDP-N-acetyl-alpha-D-glucosamine is bound by residues 124 to 128 (RPIEQ), Asp-308, and Val-330.

This sequence belongs to the EPSP synthase family. MurA subfamily.

The protein localises to the cytoplasm. The enzyme catalyses phosphoenolpyruvate + UDP-N-acetyl-alpha-D-glucosamine = UDP-N-acetyl-3-O-(1-carboxyvinyl)-alpha-D-glucosamine + phosphate. Its pathway is cell wall biogenesis; peptidoglycan biosynthesis. In terms of biological role, cell wall formation. Adds enolpyruvyl to UDP-N-acetylglucosamine. In Staphylococcus aureus (strain MRSA252), this protein is UDP-N-acetylglucosamine 1-carboxyvinyltransferase 1.